Consider the following 345-residue polypeptide: RDS/peripherin-like protein xRDS35 (345 aa).

The Cytoplasmic portion of the chain corresponds to 1–24 (MVLFKAKFSFQRRVKLAQTLWLLS). Residues 25 to 43 (WLSVLVGCLTFGMGIFLKV) traverse the membrane as a helical segment. Residues 44–61 (QLWIHNEVMENTSAHAVP) are Lumenal-facing. N-linked (GlcNAc...) asparagine glycosylation occurs at N54. A helical transmembrane segment spans residues 62-80 (NTVITAGLVGILLGIYAGK). Residues 81 to 99 (VSQASMDVTKYQRWKSFMM) are Cytoplasmic-facing. The chain crosses the membrane as a helical span at residues 100-123 (PFFFLAILSCLVCLAALVLSVALR). The Lumenal segment spans residues 124 to 264 (GTLEESLKIG…LSYYTGIMAT (141 aa)). The N-linked (GlcNAc...) asparagine glycan is linked to N229. The helical transmembrane segment at 265-290 (NGAAVTLSFLLQASVLVSLRYLHTSM) threads the bilayer. At 291–345 (DKISGPDDMEADTEGFILEKGVTETMNTTLEKMKGLFMSNQVETAEGGGEAAAAS) the chain is on the cytoplasmic side.

Belongs to the PRPH2/ROM1 family. As to quaternary structure, homodimer; disulfide-linked. In terms of tissue distribution, rod specific.

It is found in the membrane. The sequence is that of RDS/peripherin-like protein xRDS35 (rds35) from Xenopus laevis (African clawed frog).